Here is a 321-residue protein sequence, read N- to C-terminus: Glucokinase (321 aa).

8–13 (GDVGGT) is an ATP binding site.

It belongs to the bacterial glucokinase family.

The protein resides in the cytoplasm. The catalysed reaction is D-glucose + ATP = D-glucose 6-phosphate + ADP + H(+). This chain is Glucokinase, found in Citrobacter koseri (strain ATCC BAA-895 / CDC 4225-83 / SGSC4696).